We begin with the raw amino-acid sequence, 157 residues long: MQYRRAGLNILIMKSWSYLVTLAGVNEKGEVKQEEALYIVATPMDENLFKDVKYSCFSEHYIPEENAIKHGQAYALGVDFEIENPEEYGIEFFNEDDELYIFKEGIPMKEGLKNVFKILMKKLEKEGFNKDFETIRDIGTPSEDLMRECLLEAIKEK.

This is an uncharacterized protein from Aquifex aeolicus (strain VF5).